Here is a 117-residue protein sequence, read N- to C-terminus: uncharacterized protein (117 aa).

Residues 5–50 (DKIHNTNEQITALEKKKYQIETTLLEKQRDLLKLETQQNKAKLELL) adopt a coiled-coil conformation.

This is an uncharacterized protein from Bacillus pumilus (Bacillus mesentericus).